A 320-amino-acid polypeptide reads, in one-letter code: Melanocyte-stimulating hormone receptor (320 aa).

Topologically, residues 1-40 (MPVLGPERRLLASLSSAPPAAPRLGLAANQTNQTGPQCLE) are extracellular. Asn-32 carries an N-linked (GlcNAc...) asparagine glycan. The helical transmembrane segment at 41-66 (VSIPDGLFLSLGLVSLVENVLVVAAI) threads the bilayer. Residues 67–75 (AKNRNLHSP) lie on the Cytoplasmic side of the membrane. Residues 76-96 (MYYFVCCLAVSDLLVSVSNVL) traverse the membrane as a helical segment. Topologically, residues 97 to 121 (ETAVLLLLEAGALAAQAAVVQQLDN) are extracellular. The helical transmembrane segment at 122–143 (VMDVLICGSMVSSLCFLGAIAV) threads the bilayer. At 144-166 (DRYVSIFYALRYHSIVTLPRAGR) the chain is on the cytoplasmic side. The chain crosses the membrane as a helical span at residues 167–186 (AIAAIWAGSVLSSTLFIAYY). Residues 187-194 (HHTAVLLG) lie on the Extracellular side of the membrane. A helical transmembrane segment spans residues 195 to 214 (LVSFFVAMLALMAVLYVHML). Residues 215 to 243 (ARACQHGRHIARLHKTQHPTRQGCGLKGA) lie on the Cytoplasmic side of the membrane. A helical membrane pass occupies residues 244–269 (ATLTILLGVFLLCWAPFFLHLSLVVL). At 270–282 (CPQHPTCGCVFKN) the chain is on the extracellular side. The helical transmembrane segment at 283–303 (VNLFLALVICNSIVDPLIYAF) threads the bilayer. Residues 304 to 320 (RSQELRKTLQEVLQCSW) are Cytoplasmic-facing.

It belongs to the G-protein coupled receptor 1 family. Interacts with MGRN1, but does not undergo MGRN1-mediated ubiquitination; this interaction competes with GNAS-binding and thus inhibits agonist-induced cAMP production. Interacts with OPN3; the interaction results in a decrease in MC1R-mediated cAMP signaling and ultimately a decrease in melanin production in melanocytes.

The protein resides in the cell membrane. Functionally, receptor for MSH (alpha, beta and gamma) and ACTH. The activity of this receptor is mediated by G proteins which activate adenylate cyclase. Mediates melanogenesis, the production of eumelanin (black/brown) and phaeomelanin (red/yellow), via regulation of cAMP signaling in melanocytes. This is Melanocyte-stimulating hormone receptor (MC1R) from Sus scrofa (Pig).